Consider the following 240-residue polypeptide: UDP-2,3-diacylglucosamine hydrolase (240 aa).

5 residues coordinate Mn(2+): Asp8, His10, Asp41, Asn79, and His114. Asn79–Arg80 is a binding site for substrate. Residues Asp122, Ser160, Asn164, Lys167, and His195 each coordinate substrate. Residues His195 and His197 each coordinate Mn(2+).

The protein belongs to the LpxH family. It depends on Mn(2+) as a cofactor.

It localises to the cell inner membrane. It catalyses the reaction UDP-2-N,3-O-bis[(3R)-3-hydroxytetradecanoyl]-alpha-D-glucosamine + H2O = 2-N,3-O-bis[(3R)-3-hydroxytetradecanoyl]-alpha-D-glucosaminyl 1-phosphate + UMP + 2 H(+). It functions in the pathway glycolipid biosynthesis; lipid IV(A) biosynthesis; lipid IV(A) from (3R)-3-hydroxytetradecanoyl-[acyl-carrier-protein] and UDP-N-acetyl-alpha-D-glucosamine: step 4/6. Functionally, hydrolyzes the pyrophosphate bond of UDP-2,3-diacylglucosamine to yield 2,3-diacylglucosamine 1-phosphate (lipid X) and UMP by catalyzing the attack of water at the alpha-P atom. Involved in the biosynthesis of lipid A, a phosphorylated glycolipid that anchors the lipopolysaccharide to the outer membrane of the cell. This Escherichia fergusonii (strain ATCC 35469 / DSM 13698 / CCUG 18766 / IAM 14443 / JCM 21226 / LMG 7866 / NBRC 102419 / NCTC 12128 / CDC 0568-73) protein is UDP-2,3-diacylglucosamine hydrolase.